The sequence spans 212 residues: 3-isopropylmalate dehydratase small subunit (212 aa).

It belongs to the LeuD family. LeuD type 1 subfamily. Heterodimer of LeuC and LeuD.

It carries out the reaction (2R,3S)-3-isopropylmalate = (2S)-2-isopropylmalate. Its pathway is amino-acid biosynthesis; L-leucine biosynthesis; L-leucine from 3-methyl-2-oxobutanoate: step 2/4. In terms of biological role, catalyzes the isomerization between 2-isopropylmalate and 3-isopropylmalate, via the formation of 2-isopropylmaleate. The sequence is that of 3-isopropylmalate dehydratase small subunit from Beutenbergia cavernae (strain ATCC BAA-8 / DSM 12333 / CCUG 43141 / JCM 11478 / NBRC 16432 / NCIMB 13614 / HKI 0122).